A 118-amino-acid polypeptide reads, in one-letter code: Large ribosomal subunit protein uL22 (118 aa).

It belongs to the universal ribosomal protein uL22 family. In terms of assembly, part of the 50S ribosomal subunit.

This protein binds specifically to 23S rRNA; its binding is stimulated by other ribosomal proteins, e.g. L4, L17, and L20. It is important during the early stages of 50S assembly. It makes multiple contacts with different domains of the 23S rRNA in the assembled 50S subunit and ribosome. Functionally, the globular domain of the protein is located near the polypeptide exit tunnel on the outside of the subunit, while an extended beta-hairpin is found that lines the wall of the exit tunnel in the center of the 70S ribosome. The protein is Large ribosomal subunit protein uL22 of Leuconostoc mesenteroides subsp. mesenteroides (strain ATCC 8293 / DSM 20343 / BCRC 11652 / CCM 1803 / JCM 6124 / NCDO 523 / NBRC 100496 / NCIMB 8023 / NCTC 12954 / NRRL B-1118 / 37Y).